Here is a 256-residue protein sequence, read N- to C-terminus: Undecaprenyl-diphosphatase (256 aa).

The next 7 helical transmembrane spans lie at 1-21, 41-61, 69-89, 96-116, 172-192, 207-227, and 233-253; these read MDIF…FLPV, FHKT…LALF, VDIW…GFLL, LFAP…FLVL, VAAE…TGYD, ALGV…KGFL, and FNFV…LFYL.

It belongs to the UppP family.

It is found in the cell inner membrane. It carries out the reaction di-trans,octa-cis-undecaprenyl diphosphate + H2O = di-trans,octa-cis-undecaprenyl phosphate + phosphate + H(+). In terms of biological role, catalyzes the dephosphorylation of undecaprenyl diphosphate (UPP). Confers resistance to bacitracin. This is Undecaprenyl-diphosphatase from Wolinella succinogenes (strain ATCC 29543 / DSM 1740 / CCUG 13145 / JCM 31913 / LMG 7466 / NCTC 11488 / FDC 602W) (Vibrio succinogenes).